We begin with the raw amino-acid sequence, 590 residues long: Aspartate--tRNA ligase (590 aa).

Position 175 (glutamate 175) interacts with L-aspartate. The segment at 199-202 (QIFK) is aspartate. Arginine 221 is an L-aspartate binding site. Residues 221-223 (RDE) and glutamine 230 each bind ATP. Histidine 449 contacts L-aspartate. ATP is bound at residue glutamate 483. Arginine 490 provides a ligand contact to L-aspartate. Position 535–538 (535–538 (GLDR)) interacts with ATP.

This sequence belongs to the class-II aminoacyl-tRNA synthetase family. Type 1 subfamily. As to quaternary structure, homodimer.

The protein localises to the cytoplasm. The catalysed reaction is tRNA(Asp) + L-aspartate + ATP = L-aspartyl-tRNA(Asp) + AMP + diphosphate. Functionally, catalyzes the attachment of L-aspartate to tRNA(Asp) in a two-step reaction: L-aspartate is first activated by ATP to form Asp-AMP and then transferred to the acceptor end of tRNA(Asp). The protein is Aspartate--tRNA ligase of Geobacillus kaustophilus (strain HTA426).